The chain runs to 638 residues: Exocyst complex component EXO70A1 (638 aa).

Positions 163–190 (FDGLPNSLRPSSDGDGGGKPHGGHHNDD) are disordered.

It belongs to the EXO70 family. As to quaternary structure, the exocyst complex is composed of SEC3, SEC5, SEC6, SEC8, SEC10, EXO70A1 and EXO84B. Interacts with SEC3A and EXO84B. Co-localizes with FPP3/VETH1, FPP2/VETH2 and COG2 in vesicle-like small motile compartments. May interact with COG2.

The protein localises to the cytoplasm. It is found in the cytosol. The protein resides in the cytoskeleton. Its subcellular location is the phragmoplast. It localises to the cell membrane. The protein localises to the secreted. It is found in the cell wall. Its function is as follows. Component of the exocyst complex involved in the docking of exocytic vesicles with fusion sites on the plasma membrane during regulated or polarized secretion. Involved in polarized cell growth and organ morphogenesis. Involved in polarized cell growth and organ morphogenesis. During cytokinesis, involved in cell plate initiation, cell plate maturation and formation of new primary cell wall. Participates in polarized pectin delivery required for the polarized development of the mucilage-producing volcano cells of the seed coat. Involved in the recycling and localization of auxin efflux carriers PIN1 and PIN2, and thus in polar auxin transport regulation. Functions in vesicle trafficking in tracheary elements to regulate patterned secondary cell wall (SCW) thickening. The polypeptide is Exocyst complex component EXO70A1 (Arabidopsis thaliana (Mouse-ear cress)).